The sequence spans 25 residues: Brevinin-2R (25 aa).

Cysteine 19 and cysteine 25 form a disulfide bridge.

The protein belongs to the frog skin active peptide (FSAP) family. Brevinin subfamily. Expressed by the skin glands.

Its subcellular location is the secreted. Functionally, cytotoxic to cancer cells, acts via the activation of the lysosomal-mitochondrial death pathway and autophagy-like cell death. Does not show significant hemolytic activity. In Pelophylax ridibundus (Marsh frog), this protein is Brevinin-2R.